The sequence spans 197 residues: UPF0228 protein MA_3125 (197 aa).

The protein belongs to the UPF0228 family.

The protein is UPF0228 protein MA_3125 of Methanosarcina acetivorans (strain ATCC 35395 / DSM 2834 / JCM 12185 / C2A).